A 283-amino-acid polypeptide reads, in one-letter code: Zinc finger protein 691 (283 aa).

Residues 1 to 41 (MGSEKEQRPEAHLPEEGEGAKPWRVDGSKDSQITPREDHGQ) are compositionally biased toward basic and acidic residues. Residues 1-68 (MGSEKEQRPE…KVTAQAGGPG (68 aa)) are disordered. The residue at position 43 (S43) is a Phosphoserine. A Glycyl lysine isopeptide (Lys-Gly) (interchain with G-Cter in SUMO2) cross-link involves residue K81. C2H2-type zinc fingers lie at residues 83–105 (FICAQCGKTFNNTSNLRTHQRIH), 111–133 (YKCSECGKSFSRSSNRIRHERIH), 139–161 (YQCAKCQESFRRRSDLTTHQQDH), 167–189 (YRCDICGKSFTQSSTLAVHHRTH), 195–217 (YICCECGKSFSNSSSFGVHHRTH), 223–245 (YECTECGRTFSDISNFGAHQRTH), and 251–273 (YRCTLCGKHFSRSSNLIRHQKTH).

It belongs to the krueppel C2H2-type zinc-finger protein family.

Its subcellular location is the nucleus. Its function is as follows. May be involved in transcriptional regulation. This chain is Zinc finger protein 691 (Znf691), found in Mus musculus (Mouse).